The sequence spans 701 residues: Polyribonucleotide nucleotidyltransferase (701 aa).

2 residues coordinate Mg(2+): Asp-487 and Asp-493. The KH domain occupies 554–613 (PTMIAMKIDTDKIRDVIGKGGATIRAICEETKASIDIEDDGSIKIFGETKEAAEAARQRV). The region spanning 623-691 (GKIYVGKVER…NRGRIKLSIK (69 aa)) is the S1 motif domain.

Belongs to the polyribonucleotide nucleotidyltransferase family. In terms of assembly, component of the RNA degradosome, which is a multiprotein complex involved in RNA processing and mRNA degradation. Requires Mg(2+) as cofactor.

It is found in the cytoplasm. The enzyme catalyses RNA(n+1) + phosphate = RNA(n) + a ribonucleoside 5'-diphosphate. Involved in mRNA degradation. Catalyzes the phosphorolysis of single-stranded polyribonucleotides processively in the 3'- to 5'-direction. The protein is Polyribonucleotide nucleotidyltransferase of Pseudomonas putida (strain W619).